The sequence spans 88 residues: Small ribosomal subunit protein bS16 (88 aa).

This sequence belongs to the bacterial ribosomal protein bS16 family.

This chain is Small ribosomal subunit protein bS16, found in Desulfitobacterium hafniense (strain DSM 10664 / DCB-2).